The sequence spans 153 residues: MYAVVQVRGTVKTRREIKDTLKMLRLHHINHCVLIPDTPAYVGMIRKVKDFIAYGEVDAKTLEELLVNRGRLVGDIRLTDEYVKENSQYSGISDFAAALAGGQARLTDVPGLKPVLRLHPPRKGYKTTKRTVQQGGSLGYHGENINDLLYKMR.

It belongs to the universal ribosomal protein uL30 family. Part of the 50S ribosomal subunit.

The polypeptide is Large ribosomal subunit protein uL30 (Methanospirillum hungatei JF-1 (strain ATCC 27890 / DSM 864 / NBRC 100397 / JF-1)).